Here is a 389-residue protein sequence, read N- to C-terminus: Nucleic acid dioxygenase ALKBH1 (389 aa).

The interval 86-389 (SKWQAYGLKG…VKRARINPDS (304 aa)) is tRNA-binding. Substrate is bound by residues Trp144 and 175–177 (YHY). The 140-residue stretch at 208–347 (GFEDFRAEAG…RVNMTVRQVL (140 aa)) folds into the Fe2OG dioxygenase domain. 220–222 (NYY) serves as a coordination point for 2-oxoglutarate. Residues His231, Asp233, and His287 each coordinate Fe cation. Asp233 provides a ligand contact to substrate. 338–344 (RVNMTVR) is a 2-oxoglutarate binding site.

Belongs to the alkB family. As to quaternary structure, monomer. Interacts with DNAJB6. Fe(2+) is required as a cofactor. As to expression, ubiquitous.

The protein resides in the nucleus. It localises to the mitochondrion. The enzyme catalyses 2'-deoxyribonucleotide-(2'-deoxyribose 5'-phosphate)-2'-deoxyribonucleotide-DNA = a 3'-end 2'-deoxyribonucleotide-(2,3-dehydro-2,3-deoxyribose 5'-phosphate)-DNA + a 5'-end 5'-phospho-2'-deoxyribonucleoside-DNA + H(+). The catalysed reaction is a methylated nucleobase within DNA + 2-oxoglutarate + O2 = a nucleobase within DNA + formaldehyde + succinate + CO2. It catalyses the reaction an N(6)-methyl-2'-deoxyadenosine in DNA + 2-oxoglutarate + O2 = a 2'-deoxyadenosine in DNA + formaldehyde + succinate + CO2. It carries out the reaction an N(1)-methyladenosine in tRNA + 2-oxoglutarate + O2 = an adenosine in tRNA + formaldehyde + succinate + CO2. The enzyme catalyses 5-methylcytidine(34) in mitochondrial tRNA(Met) + 2 2-oxoglutarate + 2 O2 = 5-formylcytidine(34) in mitochondrial tRNA(Met) + 2 succinate + 2 CO2 + H2O. The catalysed reaction is an N(3)-methylcytidine in mRNA + 2-oxoglutarate + O2 = a cytidine in mRNA + formaldehyde + succinate + CO2. It catalyses the reaction N(1)-methyladenosine(58) in tRNA + 2-oxoglutarate + O2 = adenosine(58) in tRNA + formaldehyde + succinate + CO2. In terms of biological role, dioxygenase that acts on nucleic acids, such as DNA and tRNA. Requires molecular oxygen, alpha-ketoglutarate and iron. A number of activities have been described for this dioxygenase, but recent results suggest that it mainly acts on tRNAs and mediates their demethylation or oxidation depending on the context and subcellular compartment. Mainly acts as a tRNA demethylase by removing N(1)-methyladenine from various tRNAs, with a preference for N(1)-methyladenine at position 58 (m1A58) present on a stem loop structure of tRNAs. Acts as a regulator of translation initiation and elongation in response to glucose deprivation: regulates both translation initiation, by mediating demethylation of tRNA(Met), and translation elongation, N(1)-methyladenine-containing tRNAs being preferentially recruited to polysomes to promote translation elongation. In mitochondrion, specifically interacts with mt-tRNA(Met) and mediates oxidation of mt-tRNA(Met) methylated at cytosine(34) to form 5-formylcytosine (f(5)c) at this position. mt-tRNA(Met) containing the f(5)c modification at the wobble position enables recognition of the AUA codon in addition to the AUG codon, expanding codon recognition in mitochondrial translation. Specifically demethylates DNA methylated on the 6th position of adenine (N(6)-methyladenosine) DNA. N(6)-methyladenosine (m6A) DNA is present at some L1 elements in embryonic stem cells and probably promotes their silencing. Demethylates mRNAs containing N(3)-methylcytidine modification. Also able to repair alkylated single-stranded DNA by oxidative demethylation, but with low activity. Also has DNA lyase activity and introduces double-stranded breaks at abasic sites: cleaves both single-stranded DNA and double-stranded DNA at abasic sites, with the greatest activity towards double-stranded DNA with two abasic sites. DNA lyase activity does not require alpha-ketoglutarate and iron and leads to the formation of an irreversible covalent protein-DNA adduct with the 5' DNA product. DNA lyase activity is not required during base excision repair and class switch recombination of the immunoglobulin heavy chain during B lymphocyte activation. May play a role in placental trophoblast lineage differentiation. This chain is Nucleic acid dioxygenase ALKBH1, found in Homo sapiens (Human).